Consider the following 101-residue polypeptide: NADH-quinone oxidoreductase subunit K (101 aa).

Transmembrane regions (helical) follow at residues 4–24 (LSHY…GIFI), 29–49 (IIVI…NLVA), and 65–85 (FVLT…VVFF).

This sequence belongs to the complex I subunit 4L family. NDH-1 is composed of 14 different subunits. Subunits NuoA, H, J, K, L, M, N constitute the membrane sector of the complex.

The protein localises to the cell inner membrane. The enzyme catalyses a quinone + NADH + 5 H(+)(in) = a quinol + NAD(+) + 4 H(+)(out). In terms of biological role, NDH-1 shuttles electrons from NADH, via FMN and iron-sulfur (Fe-S) centers, to quinones in the respiratory chain. The immediate electron acceptor for the enzyme in this species is believed to be ubiquinone. Couples the redox reaction to proton translocation (for every two electrons transferred, four hydrogen ions are translocated across the cytoplasmic membrane), and thus conserves the redox energy in a proton gradient. In Methylobacterium nodulans (strain LMG 21967 / CNCM I-2342 / ORS 2060), this protein is NADH-quinone oxidoreductase subunit K.